The sequence spans 1240 residues: MPGTYAPVPNVYHLLDHLTFRSSVVIPNSNFVGRIWSDYWALQDNIVIRVSPEGAKDADYCHNSNISPILSPLKTITEYGTLHPTIDKDASERGYPSARMASSFFKLASCQARQVKIDPTRFLEFLLVTASSPRVPSGVDSDQPNPWLPETSPALQAIWQIMQRYKLNGNYYAPALVVNTGAVWWIPPPGRTNCVTVQFLITDLINLAVNAFATRLAPELEMCAVRVYLAAASTPNYAHALLDLKSIFPNLSLHSMYREGEFGGKCPRIEWTEPRSSYRFKWIGVTQLYEGLRPLTPSRDSKALLKMRDSGLEDVAKVIITMRRDHPRHTSDSVRFVRGVLSLISGMYLVRPPTMSVLREYSQTPQIEEPIPPDWWTGAVGNLSYFNDKAKGPLAHLYSVWLEAARQVVMDPSTHDPLTQAIYKTQFVTPRGGSSAALKQALVESKVELPDFSGTGVKRSSKIYQTAQLAHFSFQTLIPTIMGQVTLGIRNQVQRRARSIMPMSNPQQTVSVPHTLVANYINKHMNRSTTSGSAVQDKVIPLLLYASTPPRTVINVDIKACDASITYAAFLAPICGAMHQGFDLGDPSLPFMNVPSSTQYDRRNPAAPYNRPVSGLQTMTQHLARLYQAGFSYKVDDPFSSGNSFVFPTTTFPSGSTATSTEHTANNGAMADFFLREYVPQHAKSSTLKFIVKDMNIQNNYVCQGDDGMLIIPDLGTKRISPEDLAELMELLEKYGRGFGWVYDIDSSDSAEYLKLYALFGARIPNISRHPPVGKEYASPETGEIWPSLVNIAMGSFYNGVTDCLEWRDWLKFSWAFACFASRGSFHPKTGPRVDAQYPVWSFIYMGLPPILLPGQTPFLTSVYMPAGDQGIFAILHQWRDYLTARATSDYPPLKRRHPVWHLADVPSLLSDLGVYRGYWAAQVSRRPEPSPDDADPASVEAMSAALSTYLLKDPVLRDRVVRGTNAWRRLTDTHPGRLPSRVPSLLDVPTRWIKAGRDADKPRPSAVAMMMKDIQRAASSSRKDFSRLLELYLHVHVHLGPPVPLAVDPEVPHVAGADILNDDHWYKVTSLGPIAQSTKKYFDATLFVGKTVSGLDVEAVDATLLRMSILGAEPEEYHAFLAGIGMSDAEAHRIASAISLADAQIVQLARTVNLAVPSSWMSLDFDTLIRSHSYPRQPGISDSSTLVRERASWINSVLRLLCATVAMSRVGPVCQATVSSVDGGVNQIVGCLRAWMRDV.

The region spanning 516 to 764 (LVANYINKHM…KLYALFGARI (249 aa)) is the RdRp catalytic domain.

It belongs to the reoviridae RNA-directed RNA polymerase family.

The protein localises to the virion. It catalyses the reaction RNA(n) + a ribonucleoside 5'-triphosphate = RNA(n+1) + diphosphate. Its function is as follows. RNA-directed RNA polymerase that is involved in transcription and genome replication. Following infection, it catalyzes the synthesis of fully conservative plus strands. After core assembly, which consists in recruitment of one capped plus-strand for each genomic segments and polymerase complexes, the polymerase switches mode and catalyzes the synthesis of complementary minus-strands. The sequence is that of RNA-directed RNA polymerase VP2 (S2) from Oncorhynchus keta (Chum salmon).